Consider the following 274-residue polypeptide: 2,3,4,5-tetrahydropyridine-2,6-dicarboxylate N-succinyltransferase (274 aa).

Substrate is bound by residues Arg104 and Asp141.

The protein belongs to the transferase hexapeptide repeat family. As to quaternary structure, homotrimer.

The protein resides in the cytoplasm. It catalyses the reaction (S)-2,3,4,5-tetrahydrodipicolinate + succinyl-CoA + H2O = (S)-2-succinylamino-6-oxoheptanedioate + CoA. The protein operates within amino-acid biosynthesis; L-lysine biosynthesis via DAP pathway; LL-2,6-diaminopimelate from (S)-tetrahydrodipicolinate (succinylase route): step 1/3. The protein is 2,3,4,5-tetrahydropyridine-2,6-dicarboxylate N-succinyltransferase of Shewanella sp. (strain ANA-3).